Here is a 65-residue protein sequence, read N- to C-terminus: U15-hexatoxin-Mg1a (65 aa).

Post-translationally, contains 4 disulfide bonds. As to expression, expressed by the venom gland.

The protein localises to the secreted. Intrathorax injection into crickets causes paralysis prolonged for more than 60 minutes, followed by recovery. This chain is U15-hexatoxin-Mg1a, found in Macrothele gigas (Japanese funnel web spider).